The primary structure comprises 686 residues: Chondroitin proteoglycan 1 (686 aa).

The signal sequence occupies residues 1-18; the sequence is MLPKSVLIVAFLVASSSA. N-linked (GlcNAc...) asparagine glycosylation occurs at N46. The 58-residue stretch at 63 to 120 folds into the Chitin-binding type-2 1 domain; that stretch reads DTDCSTKEDGLYAIGGCSPQFLTCSGGIARIMDCPANLIYDQRIIACEYSYNVPECSG. C96 and C109 form a disulfide bridge. N-linked (GlcNAc...) asparagine glycosylation occurs at N143. Residues 228 to 285 enclose the Chitin-binding type-2 2 domain; it reads DKTCNGKADGFYSFGQCSDHYIACSNGYTIPMQCPARLSFDEARVICDYTMNVPECQN. C261 and C274 are oxidised to a cystine. A disordered region spans residues 284–312; sequence QNGSGNYEGSAEETTTEASGELPYSNGYG. N-linked (GlcNAc...) asparagine glycans are attached at residues N285, N635, and N664. The tract at residues 658-686 is disordered; that stretch reads KLRSATNRTSTKEATTRTQNMHAHYHRNH.

Required for polar body extrusion during cytokinesis in embryo development. Affects cortical granule size. Shown to have roles in meiotic chromosome segregation, osmotic barrier function and polarization in conjunction with cpg-2. Binds chitin. This Caenorhabditis briggsae protein is Chondroitin proteoglycan 1 (cpg-1).